Consider the following 299-residue polypeptide: ATP phosphoribosyltransferase (299 aa).

Belongs to the ATP phosphoribosyltransferase family. Long subfamily. Equilibrium between an active dimeric form, an inactive hexameric form and higher aggregates. Interconversion between the various forms is largely reversible and is influenced by the natural substrates and inhibitors of the enzyme. Mg(2+) serves as cofactor.

The protein resides in the cytoplasm. It catalyses the reaction 1-(5-phospho-beta-D-ribosyl)-ATP + diphosphate = 5-phospho-alpha-D-ribose 1-diphosphate + ATP. It participates in amino-acid biosynthesis; L-histidine biosynthesis; L-histidine from 5-phospho-alpha-D-ribose 1-diphosphate: step 1/9. With respect to regulation, feedback inhibited by histidine. In terms of biological role, catalyzes the condensation of ATP and 5-phosphoribose 1-diphosphate to form N'-(5'-phosphoribosyl)-ATP (PR-ATP). Has a crucial role in the pathway because the rate of histidine biosynthesis seems to be controlled primarily by regulation of HisG enzymatic activity. In Shigella flexneri serotype 5b (strain 8401), this protein is ATP phosphoribosyltransferase.